We begin with the raw amino-acid sequence, 463 residues long: Lariat debranching enzyme (463 aa).

The a divalent metal cation site is built by C8, H10, D33, and N78. The lariat recognition loop stretch occupies residues 118–148; it reads SGIYSAMDYKKGRYEGLPYNYKMLKSIYHTR. A divalent metal cation contacts are provided by H168, H220, and H222. Residues 250–324 form a disordered region; it reads SGFSMKGLNE…QVTKFLALDK (75 aa). A compositionally biased stretch (polar residues) spans 256–267; that stretch reads GLNEPSQERLPV. Composition is skewed to basic and acidic residues over residues 276-289 and 299-323; these read DEEG…EKQD and CRKE…LALD.

Belongs to the lariat debranching enzyme family. The cofactor is Fe(2+). Zn(2+) serves as cofactor. Mn(2+) is required as a cofactor.

It is found in the nucleus. Its subcellular location is the cytoplasm. Its activity is regulated as follows. Active in presence of diverse metals including Fe(2+), Zn(2+) and Mn(2+). Binds two metal cations in two adjacent alpha and beta metal-binding pockets. In terms of biological role, cleaves the 2'-5' phosphodiester linkage at the branch point of lariat intron pre-mRNAs after splicing and converts them into linear molecules that are subsequently degraded, thereby facilitating ribonucleotide turnover. This is Lariat debranching enzyme (dbr1) from Schizosaccharomyces pombe (strain 972 / ATCC 24843) (Fission yeast).